The sequence spans 329 residues: Bifunctional nuclease 2 (329 aa).

One can recognise a BFN domain in the interval 121–256 (CVHNNPQGGN…YLAYSDGMRV (136 aa)). The UVR domain occupies 287-322 (DTKEFDLVRNMMQAVDEERYDEAAEWRDKLGKFQAK).

The protein belongs to the bifunctional nuclease family.

It is found in the nucleus. In terms of biological role, bifunctional nuclease with both RNase and DNase activities. Involved in basal defense response. Participates in abscisic acid-derived callose deposition following infection by a necrotrophic pathogen. The sequence is that of Bifunctional nuclease 2 (BBD2) from Arabidopsis thaliana (Mouse-ear cress).